Here is a 131-residue protein sequence, read N- to C-terminus: UPF0102 protein YraN (131 aa).

The protein belongs to the UPF0102 family.

The polypeptide is UPF0102 protein YraN (Salmonella arizonae (strain ATCC BAA-731 / CDC346-86 / RSK2980)).